The following is a 122-amino-acid chain: MIQMQTNLDVADNSGARRVQCIKVLGGAKRRYAHVGDIIVVSVKEAIPRGRVKKGDVRKAVVVRVAKDIQRKDGSVIRFDGNAAVIINNNNEPLGTRIFGPVPRELRAKNHMKIVSLAPEVL.

The protein belongs to the universal ribosomal protein uL14 family. As to quaternary structure, part of the 50S ribosomal subunit. Forms a cluster with proteins L3 and L19. In the 70S ribosome, L14 and L19 interact and together make contacts with the 16S rRNA in bridges B5 and B8.

Functionally, binds to 23S rRNA. Forms part of two intersubunit bridges in the 70S ribosome. The protein is Large ribosomal subunit protein uL14 of Maricaulis maris (strain MCS10) (Caulobacter maris).